The following is a 325-amino-acid chain: Cell division protein ZipA (325 aa).

Topologically, residues 1 to 5 are periplasmic; that stretch reads MQELR. A helical transmembrane segment spans residues 6–26; the sequence is LVLILVGALAIAALLFHGLWT. Topologically, residues 27 to 325 are cytoplasmic; it reads SRKETSSKFG…KQRVKVFCRK (299 aa).

Belongs to the ZipA family. Interacts with FtsZ via their C-terminal domains.

The protein localises to the cell inner membrane. In terms of biological role, essential cell division protein that stabilizes the FtsZ protofilaments by cross-linking them and that serves as a cytoplasmic membrane anchor for the Z ring. Also required for the recruitment to the septal ring of downstream cell division proteins. In Aliivibrio fischeri (strain MJ11) (Vibrio fischeri), this protein is Cell division protein ZipA.